We begin with the raw amino-acid sequence, 1436 residues long: Gag-Pol polyprotein (1436 aa).

Glycine 2 carries the N-myristoyl glycine; by host lipid modification. Residues 7-31 (VLSGGKLDAWEKIRLRPGGRKKYRL) form an interaction with Gp41 region. Positions 8 to 43 (LSGGKLDAWEKIRLRPGGRKKYRLKHLVWASRELER) are interaction with host CALM1. The interval 12–19 (KLDAWEKI) is interaction with host AP3D1. Residues 14–33 (DAWEKIRLRPGGRKKYRLKH) form an interaction with membrane phosphatidylinositol 4,5-bisphosphate and RNA region. Residues 16–22 (WEKIRLR) carry the Nuclear export signal motif. The short motif at 26–32 (RKKYRLK) is the Nuclear localization signal element. The interval 73–77 (EDLQS) is interaction with membrane phosphatidylinositol 4,5-bisphosphate. Residues 110–129 (KNKQRTQQAPAAADKEKDSK) are disordered. At tyrosine 134 the chain carries Phosphotyrosine; by host. The interval 191–229 (NTVGGHQAAMQMLKDTINEEAAEWDRLHPVHAGPIPPGQ) is interaction with human PPIA/CYPA and NUP153. Residues 279–365 (YSPVSILDIK…GGPSHKARVL (87 aa)) form a dimerization/Multimerization of capsid protein p24 region. CCHC-type zinc fingers lie at residues 393 to 410 (VKCS…NCRA) and 414 to 431 (KGCW…DCTG). Basic and acidic residues-rich tracts occupy residues 447-457 (KAREFPPEEAR) and 464-475 (RELRVRRGDHPL). The interval 447–482 (KAREFPPEEARANSPTSRELRVRRGDHPLSEAGAER) is disordered. The dimerization of protease stretch occupies residues 490–494 (PQITL). The Peptidase A2 domain occupies 509–578 (KEALLDTGAD…TPVNIIGRNI (70 aa)). Catalysis depends on aspartate 514, which acts as the For protease activity; shared with dimeric partner. Dimerization of protease regions lie at residues 538–544 (GIGGFIK) and 577–589 (NILT…LNLP). In terms of domain architecture, Reverse transcriptase spans 632-822 (EGKISKIGPE…PPFLWMGYEL (191 aa)). Residues aspartate 698, aspartate 773, and aspartate 774 each contribute to the Mg(2+) site. Positions 815 to 823 (FLWMGYELH) are RT 'primer grip'. A Tryptophan repeat motif motif is present at residues 986–1002 (WETWWTEHWQATWIPEW). One can recognise an RNase H type-1 domain in the interval 1022-1145 (IEGAETYYVD…VDKLVSSGIR (124 aa)). Aspartate 1031, glutamate 1066, aspartate 1086, and aspartate 1137 together coordinate Mg(2+). The segment at 1151–1192 (DGIDKAQVQHEKYHSNWRAMASDFNLPPIVAKEIVASCDKCQ) adopts an Integrase-type zinc-finger fold. Zn(2+)-binding residues include histidine 1160, histidine 1164, cysteine 1188, and cysteine 1191. The Integrase catalytic domain occupies 1202–1352 (VDCSPGIWQL…SARERIIDII (151 aa)). Residues aspartate 1212, aspartate 1264, and glutamate 1300 each contribute to the Mg(2+) site. Residues 1371–1418 (FRVYYRDSRDPIWKGPAKLLWKGEGAVVIQDNSEIKVVPRRKAKIIRD) constitute a DNA-binding region (integrase-type).

In terms of assembly, homotrimer; further assembles as hexamers of trimers. Interacts with gp41 (via C-terminus). Interacts with host CALM1; this interaction induces a conformational change in the Matrix protein, triggering exposure of the myristate group. Interacts with host AP3D1; this interaction allows the polyprotein trafficking to multivesicular bodies during virus assembly. Part of the pre-integration complex (PIC) which is composed of viral genome, matrix protein, Vpr and integrase. Homodimer; the homodimer further multimerizes as homohexamers or homopentamers. Interacts with human PPIA/CYPA; This interaction stabilizes the capsid. Interacts with human NUP153. Interacts with host PDZD8; this interaction stabilizes the capsid. Interacts with monkey TRIM5; this interaction destabilizes the capsid. As to quaternary structure, homodimer, whose active site consists of two apposed aspartic acid residues. In terms of assembly, heterodimer of p66 RT and p51 RT (RT p66/p51). Heterodimerization of RT is essential for DNA polymerase activity. The overall folding of the subdomains is similar in p66 RT and p51 RT but the spatial arrangements of the subdomains are dramatically different. Homotetramer; may further associate as a homohexadecamer. Part of the pre-integration complex (PIC) which is composed of viral genome, matrix protein, Vpr and integrase. Interacts with human SMARCB1/INI1 and human PSIP1/LEDGF isoform 1. Interacts with human KPNA3; this interaction might play a role in nuclear import of the pre-integration complex. Interacts with human NUP153; this interaction might play a role in nuclear import of the pre-integration complex. Mg(2+) is required as a cofactor. Post-translationally, specific enzymatic cleavages by the viral protease yield mature proteins. The protease is released by autocatalytic cleavage. The polyprotein is cleaved during and after budding, this process is termed maturation. Proteolytic cleavage of p66 RT removes the RNase H domain to yield the p51 RT subunit. Nucleocapsid protein p7 might be further cleaved after virus entry. Tyrosine phosphorylated presumably in the virion by a host kinase. Phosphorylation is apparently not a major regulator of membrane association. In terms of processing, phosphorylated possibly by host MAPK1; this phosphorylation is necessary for Pin1-mediated virion uncoating. Post-translationally, methylated by host PRMT6, impairing its function by reducing RNA annealing and the initiation of reverse transcription.

The protein resides in the host cell membrane. It is found in the host endosome. Its subcellular location is the host multivesicular body. It localises to the virion membrane. The protein localises to the host nucleus. The protein resides in the host cytoplasm. It is found in the virion. It carries out the reaction Specific for a P1 residue that is hydrophobic, and P1' variable, but often Pro.. It catalyses the reaction Endohydrolysis of RNA in RNA/DNA hybrids. Three different cleavage modes: 1. sequence-specific internal cleavage of RNA. Human immunodeficiency virus type 1 and Moloney murine leukemia virus enzymes prefer to cleave the RNA strand one nucleotide away from the RNA-DNA junction. 2. RNA 5'-end directed cleavage 13-19 nucleotides from the RNA end. 3. DNA 3'-end directed cleavage 15-20 nucleotides away from the primer terminus.. The catalysed reaction is 3'-end directed exonucleolytic cleavage of viral RNA-DNA hybrid.. The enzyme catalyses DNA(n) + a 2'-deoxyribonucleoside 5'-triphosphate = DNA(n+1) + diphosphate. Protease: The viral protease is inhibited by many synthetic protease inhibitors (PIs), such as amprenavir, atazanavir, indinavir, loprinavir, nelfinavir, ritonavir and saquinavir. Use of protease inhibitors in tritherapy regimens permit more ambitious therapeutic strategies. Reverse transcriptase/ribonuclease H: RT can be inhibited either by nucleoside RT inhibitors (NRTIs) or by non nucleoside RT inhibitors (NNRTIs). NRTIs act as chain terminators, whereas NNRTIs inhibit DNA polymerization by binding a small hydrophobic pocket near the RT active site and inducing an allosteric change in this region. Classical NRTIs are abacavir, adefovir (PMEA), didanosine (ddI), lamivudine (3TC), stavudine (d4T), tenofovir (PMPA), zalcitabine (ddC), and zidovudine (AZT). Classical NNRTIs are atevirdine (BHAP U-87201E), delavirdine, efavirenz (DMP-266), emivirine (I-EBU), and nevirapine (BI-RG-587). The tritherapies used as a basic effective treatment of AIDS associate two NRTIs and one NNRTI. Mediates, with Gag polyprotein, the essential events in virion assembly, including binding the plasma membrane, making the protein-protein interactions necessary to create spherical particles, recruiting the viral Env proteins, and packaging the genomic RNA via direct interactions with the RNA packaging sequence (Psi). Gag-Pol polyprotein may regulate its own translation, by the binding genomic RNA in the 5'-UTR. At low concentration, the polyprotein would promote translation, whereas at high concentration, the polyprotein would encapsidate genomic RNA and then shut off translation. In terms of biological role, targets the polyprotein to the plasma membrane via a multipartite membrane-binding signal, that includes its myristoylated N-terminus. Matrix protein is part of the pre-integration complex. Implicated in the release from host cell mediated by Vpu. Binds to RNA. Functionally, forms the conical core that encapsulates the genomic RNA-nucleocapsid complex in the virion. Most core are conical, with only 7% tubular. The core is constituted by capsid protein hexamer subunits. The core is disassembled soon after virion entry. Host restriction factors such as TRIM5-alpha or TRIMCyp bind retroviral capsids and cause premature capsid disassembly, leading to blocks in reverse transcription. Capsid restriction by TRIM5 is one of the factors which restricts HIV-1 to the human species. Host PIN1 apparently facilitates the virion uncoating. On the other hand, interactions with PDZD8 or CYPA stabilize the capsid. Its function is as follows. Encapsulates and protects viral dimeric unspliced genomic RNA (gRNA). Binds these RNAs through its zinc fingers. Acts as a nucleic acid chaperone which is involved in rearangement of nucleic acid secondary structure during gRNA retrotranscription. Also facilitates template switch leading to recombination. As part of the polyprotein, participates in gRNA dimerization, packaging, tRNA incorporation and virion assembly. Aspartyl protease that mediates proteolytic cleavages of Gag and Gag-Pol polyproteins during or shortly after the release of the virion from the plasma membrane. Cleavages take place as an ordered, step-wise cascade to yield mature proteins. This process is called maturation. Displays maximal activity during the budding process just prior to particle release from the cell. Also cleaves Nef and Vif, probably concomitantly with viral structural proteins on maturation of virus particles. Hydrolyzes host EIF4GI and PABP1 in order to shut off the capped cellular mRNA translation. The resulting inhibition of cellular protein synthesis serves to ensure maximal viral gene expression and to evade host immune response. Also mediates cleavage of host YTHDF3. Mediates cleavage of host CARD8, thereby activating the CARD8 inflammasome, leading to the clearance of latent HIV-1 in patient CD4(+) T-cells after viral reactivation; in contrast, HIV-1 can evade CARD8-sensing when its protease remains inactive in infected cells prior to viral budding. In terms of biological role, multifunctional enzyme that converts the viral RNA genome into dsDNA in the cytoplasm, shortly after virus entry into the cell. This enzyme displays a DNA polymerase activity that can copy either DNA or RNA templates, and a ribonuclease H (RNase H) activity that cleaves the RNA strand of RNA-DNA heteroduplexes in a partially processive 3' to 5' endonucleasic mode. Conversion of viral genomic RNA into dsDNA requires many steps. A tRNA(3)-Lys binds to the primer-binding site (PBS) situated at the 5'-end of the viral RNA. RT uses the 3' end of the tRNA primer to perform a short round of RNA-dependent minus-strand DNA synthesis. The reading proceeds through the U5 region and ends after the repeated (R) region which is present at both ends of viral RNA. The portion of the RNA-DNA heteroduplex is digested by the RNase H, resulting in a ssDNA product attached to the tRNA primer. This ssDNA/tRNA hybridizes with the identical R region situated at the 3' end of viral RNA. This template exchange, known as minus-strand DNA strong stop transfer, can be either intra- or intermolecular. RT uses the 3' end of this newly synthesized short ssDNA to perform the RNA-dependent minus-strand DNA synthesis of the whole template. RNase H digests the RNA template except for two polypurine tracts (PPTs) situated at the 5'-end and near the center of the genome. It is not clear if both polymerase and RNase H activities are simultaneous. RNase H probably can proceed both in a polymerase-dependent (RNA cut into small fragments by the same RT performing DNA synthesis) and a polymerase-independent mode (cleavage of remaining RNA fragments by free RTs). Secondly, RT performs DNA-directed plus-strand DNA synthesis using the PPTs that have not been removed by RNase H as primers. PPTs and tRNA primers are then removed by RNase H. The 3' and 5' ssDNA PBS regions hybridize to form a circular dsDNA intermediate. Strand displacement synthesis by RT to the PBS and PPT ends produces a blunt ended, linear dsDNA copy of the viral genome that includes long terminal repeats (LTRs) at both ends. Functionally, catalyzes viral DNA integration into the host chromosome, by performing a series of DNA cutting and joining reactions. This enzyme activity takes place after virion entry into a cell and reverse transcription of the RNA genome in dsDNA. The first step in the integration process is 3' processing. This step requires a complex comprising the viral genome, matrix protein, Vpr and integrase. This complex is called the pre-integration complex (PIC). The integrase protein removes 2 nucleotides from each 3' end of the viral DNA, leaving recessed CA OH's at the 3' ends. In the second step, the PIC enters cell nucleus. This process is mediated through integrase and Vpr proteins, and allows the virus to infect a non dividing cell. This ability to enter the nucleus is specific of lentiviruses, other retroviruses cannot and rely on cell division to access cell chromosomes. In the third step, termed strand transfer, the integrase protein joins the previously processed 3' ends to the 5' ends of strands of target cellular DNA at the site of integration. The 5'-ends are produced by integrase-catalyzed staggered cuts, 5 bp apart. A Y-shaped, gapped, recombination intermediate results, with the 5'-ends of the viral DNA strands and the 3' ends of target DNA strands remaining unjoined, flanking a gap of 5 bp. The last step is viral DNA integration into host chromosome. This involves host DNA repair synthesis in which the 5 bp gaps between the unjoined strands are filled in and then ligated. Since this process occurs at both cuts flanking the HIV genome, a 5 bp duplication of host DNA is produced at the ends of HIV-1 integration. Alternatively, Integrase may catalyze the excision of viral DNA just after strand transfer, this is termed disintegration. This Human immunodeficiency virus type 1 group M subtype H (isolate VI991) (HIV-1) protein is Gag-Pol polyprotein (gag-pol).